Reading from the N-terminus, the 207-residue chain is ATP-dependent Clp protease proteolytic subunit (207 aa).

Catalysis depends on Ser-111, which acts as the Nucleophile. His-136 is a catalytic residue.

Belongs to the peptidase S14 family. Fourteen ClpP subunits assemble into 2 heptameric rings which stack back to back to give a disk-like structure with a central cavity, resembling the structure of eukaryotic proteasomes.

The protein localises to the cytoplasm. The enzyme catalyses Hydrolysis of proteins to small peptides in the presence of ATP and magnesium. alpha-casein is the usual test substrate. In the absence of ATP, only oligopeptides shorter than five residues are hydrolyzed (such as succinyl-Leu-Tyr-|-NHMec, and Leu-Tyr-Leu-|-Tyr-Trp, in which cleavage of the -Tyr-|-Leu- and -Tyr-|-Trp bonds also occurs).. Cleaves peptides in various proteins in a process that requires ATP hydrolysis. Has a chymotrypsin-like activity. Plays a major role in the degradation of misfolded proteins. This chain is ATP-dependent Clp protease proteolytic subunit, found in Aeromonas salmonicida (strain A449).